Here is a 543-residue protein sequence, read N- to C-terminus: CTP synthase (543 aa).

The segment at 1-265 (MTNYIFVTGG…DELVVQRFGL (265 aa)) is amidoligase domain. Position 13 (S13) interacts with CTP. Residue S13 participates in UTP binding. ATP contacts are provided by residues 14–19 (SLGKGI) and D71. D71 and E139 together coordinate Mg(2+). Residues 146–148 (DIE), 186–191 (KTKPTQ), and K222 each bind CTP. UTP-binding positions include 186 to 191 (KTKPTQ) and K222. 238 to 240 (KDA) is a binding site for ATP. The region spanning 290-541 (TIGMVGKYVE…VKAAGEYYKN (252 aa)) is the Glutamine amidotransferase type-1 domain. G351 contributes to the L-glutamine binding site. C378 acts as the Nucleophile; for glutamine hydrolysis in catalysis. L-glutamine contacts are provided by residues 379 to 382 (LGMQ), E402, and R469. Residues H514 and E516 contribute to the active site.

It belongs to the CTP synthase family. As to quaternary structure, homotetramer.

It catalyses the reaction UTP + L-glutamine + ATP + H2O = CTP + L-glutamate + ADP + phosphate + 2 H(+). It carries out the reaction L-glutamine + H2O = L-glutamate + NH4(+). The catalysed reaction is UTP + NH4(+) + ATP = CTP + ADP + phosphate + 2 H(+). It functions in the pathway pyrimidine metabolism; CTP biosynthesis via de novo pathway; CTP from UDP: step 2/2. Its activity is regulated as follows. Allosterically activated by GTP, when glutamine is the substrate; GTP has no effect on the reaction when ammonia is the substrate. The allosteric effector GTP functions by stabilizing the protein conformation that binds the tetrahedral intermediate(s) formed during glutamine hydrolysis. Inhibited by the product CTP, via allosteric rather than competitive inhibition. Catalyzes the ATP-dependent amination of UTP to CTP with either L-glutamine or ammonia as the source of nitrogen. Regulates intracellular CTP levels through interactions with the four ribonucleotide triphosphates. The chain is CTP synthase from Pseudoalteromonas atlantica (strain T6c / ATCC BAA-1087).